Consider the following 1024-residue polypeptide: Error-prone DNA polymerase (1024 aa).

The protein belongs to the DNA polymerase type-C family. DnaE2 subfamily.

The protein resides in the cytoplasm. It carries out the reaction DNA(n) + a 2'-deoxyribonucleoside 5'-triphosphate = DNA(n+1) + diphosphate. Its function is as follows. DNA polymerase involved in damage-induced mutagenesis and translesion synthesis (TLS). It is not the major replicative DNA polymerase. This chain is Error-prone DNA polymerase, found in Vibrio vulnificus (strain CMCP6).